The chain runs to 570 residues: MSEKHPGPLVVEGKLSDAERMKLESNYLRGTIAEDLNDGLTGGFKGDNFLLIRFHGMYQQDDRDIRAERAAQKLEPRHAMLLRCRLPGGVITTTQWQAIDKFAADNTIYGSIRLTNRQTFQFHGILKKNVKPVHQMLHSVGLDALATANDMNRNVLCTSNPYESQLHAEAYEWAKKISEHLLPRTRAYAEIWLDQEKVATTDEEPILGQTYLPRKFKTTVVIPPQNDIDLHANDMNFVAIAENGKLVGFNLLVGGGLSIEHGNKKTYARTASEFGYLPLEHTLAVAEAVVTTQRDWGNRTDRKNAKTKYTLERVGLETFKAEVERRAGIKFEPIRPYEFTGRGDRIGWVKGIDNNWHLTLFIENGRILDYPGRPLKTGLLEIAKIHQGEFRITANQNLIIASVPESQKVKIETLARDHGLMNAVSAQRENSMACVSFPTCPLAMAEAERFLPSFTDKVEAILEKHGIPDEHIVMRVTGCPNGCGRAMLAEIGLVGKAPGRYNLHLGGNRIGTRIPRMYKENITESDILASLDELVGRWAKEREAGEGFGDFTVRAGIIRPVLDPARDFWE.

Positions 434, 440, 479, and 483 each coordinate [4Fe-4S] cluster. Position 483 (cysteine 483) interacts with siroheme.

This sequence belongs to the nitrite and sulfite reductase 4Fe-4S domain family. In terms of assembly, alpha(8)-beta(8). The alpha component is a flavoprotein, the beta component is a hemoprotein. It depends on siroheme as a cofactor. [4Fe-4S] cluster is required as a cofactor.

It catalyses the reaction hydrogen sulfide + 3 NADP(+) + 3 H2O = sulfite + 3 NADPH + 4 H(+). The protein operates within sulfur metabolism; hydrogen sulfide biosynthesis; hydrogen sulfide from sulfite (NADPH route): step 1/1. In terms of biological role, component of the sulfite reductase complex that catalyzes the 6-electron reduction of sulfite to sulfide. This is one of several activities required for the biosynthesis of L-cysteine from sulfate. The sequence is that of Sulfite reductase [NADPH] hemoprotein beta-component from Salmonella schwarzengrund (strain CVM19633).